The sequence spans 248 residues: Ureidoacrylate amidohydrolase RutB (248 aa).

The active-site Proton acceptor is Asp-41. Residue Lys-150 is part of the active site. The active-site Nucleophile is the Cys-183.

This sequence belongs to the isochorismatase family. RutB subfamily.

The enzyme catalyses (Z)-3-ureidoacrylate + H2O + H(+) = (Z)-3-aminoacrylate + NH4(+) + CO2. The catalysed reaction is (Z)-3-ureidoacrylate + H2O = (Z)-3-aminoacrylate + carbamate + H(+). It carries out the reaction (Z)-2-methylureidoacrylate + H2O + H(+) = (Z)-2-methylaminoacrylate + NH4(+) + CO2. Its function is as follows. Hydrolyzes ureidoacrylate to form aminoacrylate and carbamate. The carbamate hydrolyzes spontaneously, thereby releasing one of the nitrogen atoms of the pyrimidine ring as ammonia and one of its carbon atoms as CO2. The protein is Ureidoacrylate amidohydrolase RutB of Methylorubrum extorquens (strain DSM 6343 / CIP 106787 / DM4) (Methylobacterium extorquens).